Consider the following 289-residue polypeptide: Delta-sarcoglycan (289 aa).

At 1-37 (MPQEQYSHHRSTMPSSEGPHIYKVGIYGWRKRCLYFF) the chain is on the cytoplasmic side. Residues 38-56 (VLLLMILILVNLAMTIWIL) form a helical; Signal-anchor for type II membrane protein membrane-spanning segment. The Extracellular segment spans residues 57–289 (KVMNFTIDGM…TCQINTSVCL (233 aa)). N-linked (GlcNAc...) asparagine glycosylation is found at N60 and N108. Disulfide bonds link C263-C288 and C265-C281. N284 carries an N-linked (GlcNAc...) asparagine glycan.

This sequence belongs to the sarcoglycan beta/delta/gamma/zeta family. Interacts with FLNC. Cross-link to form 2 major subcomplexes: one consisting of SGCB, SGCD and SGCG and the other consisting of SGCB and SGCD. The association between SGCB and SGCG is particularly strong while SGCA is loosely associated with the other sarcoglycans. Interacts with DAG1. Post-translationally, disulfide bonds are present. As to expression, most strongly expressed in skeletal and heart muscle. Also detected in proliferating myoblasts.

The protein localises to the cell membrane. Its subcellular location is the sarcolemma. It localises to the cytoplasm. It is found in the cytoskeleton. Its function is as follows. Component of the sarcoglycan complex, a subcomplex of the dystrophin-glycoprotein complex which forms a link between the F-actin cytoskeleton and the extracellular matrix. In Mus musculus (Mouse), this protein is Delta-sarcoglycan (Sgcd).